The following is a 352-amino-acid chain: Peptide chain release factor 1 (352 aa).

Gln-229 bears the N5-methylglutamine mark.

Belongs to the prokaryotic/mitochondrial release factor family. Post-translationally, methylated by PrmC. Methylation increases the termination efficiency of RF1.

The protein localises to the cytoplasm. Peptide chain release factor 1 directs the termination of translation in response to the peptide chain termination codons UAG and UAA. The polypeptide is Peptide chain release factor 1 (Gluconacetobacter diazotrophicus (strain ATCC 49037 / DSM 5601 / CCUG 37298 / CIP 103539 / LMG 7603 / PAl5)).